The following is a 748-amino-acid chain: Pleckstrin homology domain-containing family M member 3 (748 aa).

Disordered stretches follow at residues 88 to 107 and 129 to 187; these read HAKE…PLLS and NDSL…RNKN. Composition is skewed to basic and acidic residues over residues 129–140 and 148–159; these read NDSLDHLEDAPK and SRSDVSHIDWKN. The span at 167–180 shows a compositional bias: polar residues; sequence QRSSSQGMHCTSPF. PH domains are found at residues 200–297 and 348–443; these read NILK…EAIC and NIIK…SAAN. The segment at 656 to 709 adopts a Phorbol-ester/DAG-type zinc-finger fold; sequence SHVYSCSLCSQKGFICEICNNGEILYPFEENSTSRCENCGAVFHSDCKVRTVPC.

Its subcellular location is the cytoplasm. It is found in the golgi apparatus. The protein resides in the cell membrane. Its function is as follows. May play a role during muscle differentiation. In Xenopus laevis (African clawed frog), this protein is Pleckstrin homology domain-containing family M member 3 (plekhm3).